The chain runs to 332 residues: MNSTHHHGMHTSLHFWNRSTYGLHSNASEPLGKGYSEGGCYEQLFVSPEVFVTLGVISLLENILVIVAIAKNKNLHSPMYFFICSLAVADMLVSVSNGSETIVITLLNSTDTDAQSFTVNIDNVIDSVICSSLLASICSLLSIAVDRYFTIFYALQYHNIMTVKRVGIIISCIWAVCTVSGVLFIIYSDSSAVIICLITVFFTMLALMASLYVHMFLMARLHIKRIAVLPGTGTIRQGANMKGAITLTILIGVFVVCWAPFFLHLIFYISCPQNPYCVCFMSHFNLYLILIMCNSIIDPLIYALRSQELRKTFKEIICCYPLGGLCDLSSRY.

Residues 1-43 (MNSTHHHGMHTSLHFWNRSTYGLHSNASEPLGKGYSEGGCYEQ) are Extracellular-facing. Residues N2, N17, and N26 are each glycosylated (N-linked (GlcNAc...) asparagine). Cystine bridges form between C40–C279 and C271–C277. A helical transmembrane segment spans residues 44–69 (LFVSPEVFVTLGVISLLENILVIVAI). Topologically, residues 70 to 81 (AKNKNLHSPMYF) are cytoplasmic. A helical membrane pass occupies residues 82 to 106 (FICSLAVADMLVSVSNGSETIVITL). The Ca(2+) site is built by E100, D122, and D126. Residues 107–123 (LNSTDTDAQSFTVNIDN) lie on the Extracellular side of the membrane. A helical membrane pass occupies residues 124–145 (VIDSVICSSLLASICSLLSIAV). The Cytoplasmic segment spans residues 146-165 (DRYFTIFYALQYHNIMTVKR). Residues 166–186 (VGIIISCIWAVCTVSGVLFII) form a helical membrane-spanning segment. At 187 to 191 (YSDSS) the chain is on the extracellular side. The helical transmembrane segment at 192-215 (AVIICLITVFFTMLALMASLYVHM) threads the bilayer. At 216–248 (FLMARLHIKRIAVLPGTGTIRQGANMKGAITLT) the chain is on the cytoplasmic side. The helical transmembrane segment at 249–271 (ILIGVFVVCWAPFFLHLIFYISC) threads the bilayer. The Extracellular segment spans residues 272 to 280 (PQNPYCVCF). The chain crosses the membrane as a helical span at residues 281–304 (MSHFNLYLILIMCNSIIDPLIYAL). The Cytoplasmic segment spans residues 305–332 (RSQELRKTFKEIICCYPLGGLCDLSSRY). C318 carries S-palmitoyl cysteine lipidation.

This sequence belongs to the G-protein coupled receptor 1 family. In terms of assembly, homodimer; disulfide-linked, also forms higher order oligomers. Interacts with GNAS. Interacts with ATRNL1. Interacts with MGRN1; this interaction competes with GNAS-binding and thus inhibits agonist-induced cAMP production. Interacts with MRAP and MRAP2; these associated factors increase ligand-sensitivity and generation of cAMP.

The protein localises to the cell membrane. Its function is as follows. Hormone receptor that acts as a key component of the leptin-melanocortin pathway at the intersection of homeostatic maintenance of energetic state. Plays a role in regulating food intake: activation by a stimulating hormone such as anorexigenic alpha-melanocyte stimulating hormone (alpha-MSH) inhibits appetite, whereas binding to a natural antagonist like Agouti-related protein/AGRP promotes appetite. G-protein-coupled receptor that activates conventional Galphas signaling leading to induction of anorexogenic signaling in the hypothalamus to result in negative energy balance. Regulates the firing activity of neurons from the hypothalamus by alpha-MSH and AGRP independently of Galphas signaling by ligand-induced coupling of closure of inwardly rectifying potassium channel KCNJ13. In intestinal epithelial cells, plays a role in the inhibition of hepatic glucose production via nesfatin-1/NUCB2 leading to increased cyclic adenosine monophosphate (cAMP) levels and glucagon-like peptide 1 (GLP-1) secretion in the intestinal epithelium. This is Melanocortin receptor 4 (MC4R) from Sus scrofa (Pig).